The sequence spans 697 residues: Polyribonucleotide nucleotidyltransferase (697 aa).

Residues D488 and D494 each coordinate Mg(2+). In terms of domain architecture, KH spans 555–614; sequence PTFEVITINPDKIRDVIGKGGATIRQITEETKAAIDIEDNGTVRVFGETKAAAKAAIAKI. The S1 motif domain maps to 624 to 692; that stretch reads GKIYDGKVIR…NRGRIKLTMK (69 aa).

It belongs to the polyribonucleotide nucleotidyltransferase family. As to quaternary structure, component of the RNA degradosome, which is a multiprotein complex involved in RNA processing and mRNA degradation. The cofactor is Mg(2+).

Its subcellular location is the cytoplasm. The catalysed reaction is RNA(n+1) + phosphate = RNA(n) + a ribonucleoside 5'-diphosphate. Functionally, involved in mRNA degradation. Catalyzes the phosphorolysis of single-stranded polyribonucleotides processively in the 3'- to 5'-direction. This is Polyribonucleotide nucleotidyltransferase from Acinetobacter baumannii (strain AB307-0294).